The chain runs to 160 residues: Cytochrome b6-f complex subunit 4 (160 aa).

Transmembrane regions (helical) follow at residues 36 to 56 (ILYM…GLSI), 95 to 115 (LVGV…PFIE), and 127 to 147 (PIAT…GIGA).

Belongs to the cytochrome b family. PetD subfamily. As to quaternary structure, the 4 large subunits of the cytochrome b6-f complex are cytochrome b6, subunit IV (17 kDa polypeptide, petD), cytochrome f and the Rieske protein, while the 4 small subunits are petG, petL, petM and petN. The complex functions as a dimer.

The protein resides in the plastid. The protein localises to the chloroplast thylakoid membrane. Component of the cytochrome b6-f complex, which mediates electron transfer between photosystem II (PSII) and photosystem I (PSI), cyclic electron flow around PSI, and state transitions. The protein is Cytochrome b6-f complex subunit 4 of Gracilaria tenuistipitata var. liui (Red alga).